The primary structure comprises 218 residues: uncharacterized protein (218 aa).

It belongs to the mimivirus L6/L7/L57 family.

This is an uncharacterized protein from Acanthamoeba polyphaga mimivirus (APMV).